Here is a 101-residue protein sequence, read N- to C-terminus: MDKSKRLFLKSKRSFRRRLPPIQSGDRIDYRNMSLISRFISEQGKILSRRVNRLTLKQQRLITIAIKQARILSLLPFLNNEKQFERSESTTRTTALRTRNK.

This sequence belongs to the bacterial ribosomal protein bS18 family. Part of the 30S ribosomal subunit.

It localises to the plastid. Its subcellular location is the chloroplast. The sequence is that of Small ribosomal subunit protein bS18c from Gossypium barbadense (Sea Island cotton).